The primary structure comprises 208 residues: AN1-type zinc finger protein 6 (208 aa).

The A20-type zinc finger occupies 8–42 (SQVPMLCSTGCGFYGNPRTNGMCSVCYKEHLQRQN). Zn(2+) is bound by residues Cys14, Cys18, Cys30, and Cys33. A compositionally biased stretch (polar residues) spans 41 to 68 (QNSSNGRISPPATSVSSLSESLPVQCTD). The interval 41–140 (QNSSNGRISP…PSEEQSKSLE (100 aa)) is disordered. Ser49 carries the phosphoserine modification. The segment covering 75-94 (QSTLDSTSSSMQPSPVSNQS) has biased composition (low complexity). Composition is skewed to polar residues over residues 95–110 (LLSESVASSQLDSTSV) and 120–133 (LQASVSDTAQQPSE). The AN1-type zinc finger occupies 143-189 (KQKKNRCFMCRKKVGLTGFECRCGNVYCGVHRYSDVHNCSYNYKADA). Residues Cys149, Cys152, Cys163, Cys165, Cys170, His173, His179, and Cys181 each contribute to the Zn(2+) site. N6-acetyllysine is present on Lys204.

In terms of assembly, interacts with PKN1. Interacts with TRAF2. Interacts with mono- and polyubiquitin. Interacts with PEX6. Interacts with PEX5 (Cys-linked ubiquitinated).

The protein resides in the cytoplasm. Functionally, involved in regulation of TNF-alpha induced NF-kappa-B activation and apoptosis. Involved in modulation of 'Lys-48'-linked polyubiquitination status of TRAF2 and decreases association of TRAF2 with RIPK1. Required for PTS1 target sequence-dependent protein import into peroxisomes and PEX5 stability; may cooperate with PEX6. In vitro involved in PEX5 export from the cytosol to peroxisomes. This is AN1-type zinc finger protein 6 (ZFAND6) from Pongo abelii (Sumatran orangutan).